A 284-amino-acid chain; its full sequence is 3-methyl-2-oxobutanoate hydroxymethyltransferase 2 (284 aa).

Mg(2+) contacts are provided by D49 and D88. Residues 49-50, D88, and K118 each bind 3-methyl-2-oxobutanoate; that span reads DS. E120 contacts Mg(2+). E187 (proton acceptor) is an active-site residue.

The protein belongs to the PanB family. Homodecamer; pentamer of dimers. The cofactor is Mg(2+).

The protein resides in the cytoplasm. It catalyses the reaction 3-methyl-2-oxobutanoate + (6R)-5,10-methylene-5,6,7,8-tetrahydrofolate + H2O = 2-dehydropantoate + (6S)-5,6,7,8-tetrahydrofolate. It functions in the pathway cofactor biosynthesis; (R)-pantothenate biosynthesis; (R)-pantoate from 3-methyl-2-oxobutanoate: step 1/2. Its function is as follows. Catalyzes the reversible reaction in which hydroxymethyl group from 5,10-methylenetetrahydrofolate is transferred onto alpha-ketoisovalerate to form ketopantoate. This is 3-methyl-2-oxobutanoate hydroxymethyltransferase 2 from Burkholderia ambifaria (strain ATCC BAA-244 / DSM 16087 / CCUG 44356 / LMG 19182 / AMMD) (Burkholderia cepacia (strain AMMD)).